A 334-amino-acid chain; its full sequence is Hematopoietic SH2 domain-containing protein (334 aa).

The 92-residue stretch at 34–125 (WFHGTISREA…PFGELLTQAC (92 aa)) folds into the SH2 domain. Disordered regions lie at residues 157–181 (EVQR…KGEF) and 254–280 (EDSC…ATFR). Positions 258–267 (AATTSLQNPA) are enriched in polar residues.

As to quaternary structure, interacts with FES and TNK2. Post-translationally, may be phosphorylated by FES and ACK1. As to expression, predominantly expressed in spleen and thymus. Appears not to be expressed in heart, brain, liver, kidney, embryo, lung and ovary.

It localises to the cytoplasm. It is found in the mitochondrion. Its function is as follows. Adapter protein involved in tyrosine kinase and CD28 signaling. May be a modulator of the apoptotic response through its ability to affect mitochondrial stability. This chain is Hematopoietic SH2 domain-containing protein (Hsh2d), found in Mus musculus (Mouse).